Consider the following 377-residue polypeptide: Palmitoyltransferase ZDHHC16 (377 aa).

The Cytoplasmic portion of the chain corresponds to 1-77 (MRGQRSLLLG…VYWLVDNVIR (77 aa)). A helical membrane pass occupies residues 78–98 (WFGVVFVVLVIVLTGSIVAIA). Residues 99–116 (YLCVLPLILRTYSVPRLC) are Lumenal-facing. A helical membrane pass occupies residues 117–137 (WHFFYSHWNLILIVFHYYQAI). Topologically, residues 138-198 (TTPPGYPPQG…NNCVGHYNHR (61 aa)) are cytoplasmic. The region spanning 155-205 (SICKKCIYPKPARTHHCSICNRCVLKMDHHCPWLNNCVGHYNHRYFFSFCF) is the DHHC domain. Residue Cys185 is the S-palmitoyl cysteine intermediate of the active site. The chain crosses the membrane as a helical span at residues 199 to 219 (YFFSFCFFMTLGCVYCSYGSW). Over 220–266 (DLFREAYAAIEKMKQLDKNKLQAVANQTYHQTPPPTFSFRERMTHKS) the chain is Lumenal. Residues 267–287 (LVYLWFLCSSVALALGALTVW) traverse the membrane as a helical segment. Topologically, residues 288–377 (HAVLISRGET…TAHSASVMAV (90 aa)) are cytoplasmic.

Belongs to the DHHC palmitoyltransferase family. In terms of assembly, interacts with ABL1. Interacts with COPS5/JAB1. In terms of tissue distribution, widely expressed.

It is found in the endoplasmic reticulum membrane. The catalysed reaction is L-cysteinyl-[protein] + hexadecanoyl-CoA = S-hexadecanoyl-L-cysteinyl-[protein] + CoA. Its function is as follows. Palmitoyl acyltransferase that mediates palmitoylation of proteins such as PLN and ZDHHC6. Required during embryonic heart development and cardiac function, possibly by mediating palmitoylation of PLN, thereby affecting PLN phosphorylation and homooligomerization. Also required for eye development. Palmitoylates ZDHHC6, affecting the quaternary assembly of ZDHHC6, its localization, stability and function. May play a role in DNA damage response. May be involved in apoptosis regulation. Involved in the proliferation of neural stem cells by regulating the FGF/ERK pathway. The chain is Palmitoyltransferase ZDHHC16 from Homo sapiens (Human).